A 620-amino-acid chain; its full sequence is Threonine--tRNA ligase (620 aa).

Residues methionine 1–glutamate 141 are editing domain. Residues proline 197–proline 496 form a catalytic region. Residues cysteine 289, histidine 341, and histidine 465 each contribute to the Zn(2+) site.

This sequence belongs to the class-II aminoacyl-tRNA synthetase family. As to quaternary structure, homodimer. Zn(2+) is required as a cofactor.

It localises to the cytoplasm. The catalysed reaction is tRNA(Thr) + L-threonine + ATP = L-threonyl-tRNA(Thr) + AMP + diphosphate + H(+). Its activity is regulated as follows. Not inhibited by 1 uM borrelidin (BN); probably does not bind BN. In terms of biological role, catalyzes the attachment of threonine to tRNA(Thr) in a two-step reaction: L-threonine is first activated by ATP to form Thr-AMP and then transferred to the acceptor end of tRNA(Thr). Also activates L-serine, but does not detectably transfer it to tRNA(Thr). Edits incorrectly charged L-seryl-tRNA(Thr) via its editing domain. Has no activity on correctly acylated L-seryl-tRNA(Ser) or L-threonyl-tRNA(Thr). Deacylates correctly charged glycyl-tRNA(Gly), but not glycyl-tRNA(Gly)(2'-dA76) (the terminal 2'-OH of tRNA adenine 76 has been dehydroxylated) nor the 2'-fluoro tRNA derivative, strongly suggesting the editing function is tRNA catalyzed. In Methanocaldococcus jannaschii (strain ATCC 43067 / DSM 2661 / JAL-1 / JCM 10045 / NBRC 100440) (Methanococcus jannaschii), this protein is Threonine--tRNA ligase.